The sequence spans 359 residues: ATP-dependent (S)-NAD(P)H-hydrate dehydratase (359 aa).

The YjeF C-terminal domain occupies 61–350 (LLEEARKVVP…SEINSVFVNN (290 aa)). (6S)-NADPHX is bound by residues Gly-161 and 214–220 (NVVEFQR). ATP is bound by residues 256 to 260 (KGEVD) and 275 to 284 (GSPRRCGGQG). Position 285 (Asp-285) interacts with (6S)-NADPHX.

The protein belongs to the NnrD/CARKD family. The cofactor is Mg(2+).

It catalyses the reaction (6S)-NADHX + ATP = ADP + phosphate + NADH + H(+). It carries out the reaction (6S)-NADPHX + ATP = ADP + phosphate + NADPH + H(+). Catalyzes the dehydration of the S-form of NAD(P)HX at the expense of ATP, which is converted to ADP. Together with NAD(P)HX epimerase, which catalyzes the epimerization of the S- and R-forms, the enzyme allows the repair of both epimers of NAD(P)HX, a damaged form of NAD(P)H that is a result of enzymatic or heat-dependent hydration. This Ciona intestinalis (Transparent sea squirt) protein is ATP-dependent (S)-NAD(P)H-hydrate dehydratase.